The following is a 344-amino-acid chain: Phenylalanine--tRNA ligase alpha subunit (344 aa).

Residue Glu256 coordinates Mg(2+).

This sequence belongs to the class-II aminoacyl-tRNA synthetase family. Phe-tRNA synthetase alpha subunit type 1 subfamily. Tetramer of two alpha and two beta subunits. Mg(2+) serves as cofactor.

It is found in the cytoplasm. It catalyses the reaction tRNA(Phe) + L-phenylalanine + ATP = L-phenylalanyl-tRNA(Phe) + AMP + diphosphate + H(+). This chain is Phenylalanine--tRNA ligase alpha subunit, found in Bacillus pumilus (strain SAFR-032).